A 530-amino-acid chain; its full sequence is PC4 and SFRS1-interacting protein (530 aa).

The region spanning 1–64 is the PWWP domain; it reads MTRDFKPGDL…PKDIFPYSEN (64 aa). Residue Lys75 forms a Glycyl lysine isopeptide (Lys-Gly) (interchain with G-Cter in SUMO2) linkage. Residues 88-349 form a disordered region; that stretch reads PKVKFSSQQA…VEKKRETSMD (262 aa). Over residues 93 to 107 the composition is skewed to low complexity; sequence SSQQASAKQSNASSD. Ser102, Ser105, and Ser106 each carry phosphoserine. Positions 113–135 are enriched in basic and acidic residues; sequence KETSVSKEDTDPEEKASNEDVTK. Phosphothreonine occurs at positions 115 and 122. A Phosphoserine modification is found at Ser129. Thr141 bears the Phosphothreonine mark. The segment covering 144–153 has biased composition (basic residues); it reads AARRGRKRKA. The Nuclear localization signal signature appears at 146–156; that stretch reads RRGRKRKAEKQ. Thr167 carries the post-translational modification Phosphothreonine. Ser177 and Ser206 each carry phosphoserine. A compositionally biased stretch (basic and acidic residues) spans 213-261; it reads EEDKSKKKGQEEKQPKKQLKKDEEGQKEEEKPRKEPDKKEGKKEVESKR. Phosphoserine is present on Ser271. Thr272 is modified (phosphothreonine). Phosphoserine is present on residues Ser273 and Ser275. Residues 274 to 283 are compositionally biased toward acidic residues; that stretch reads DSEEEGDDQE. Residues 287–302 are compositionally biased toward basic residues; it reads KRKGGRNFQTAHRRNM. Basic and acidic residues predominate over residues 305–349; sequence GQHEKEAADRKRKQEEQMETEQQNKDEGKKPEVKKVEKKRETSMD. 2 coiled-coil regions span residues 306–334 and 371–395; these read QHEKEAADRKRKQEEQMETEQQNKDEGKK and NRCIEALDELASLQVTMQQAQKHTE. Residues 340-417 are integrase-binding domain (IBD); the sequence is VEKKRETSMD…VSQVIMEKST (78 aa). Ser434 carries the post-translational modification Phosphoserine. Thr437 is modified (phosphothreonine). Ser443 carries the phosphoserine modification. The segment covering 446–473 has biased composition (basic and acidic residues); it reads EQRQHEEANKTKDQGKKGPNKKLEKEQT. The interval 446-530 is disordered; it reads EQRQHEEANK…ISLKDSTLDN (85 aa). A compositionally biased stretch (polar residues) spans 474 to 494; it reads GSKTLNGGSDAQDSNQPQHNG. Over residues 498–530 the composition is skewed to basic and acidic residues; that stretch reads EESKDNHEASSKKKPSSEERETEISLKDSTLDN. Ser514 is subject to Phosphoserine. A Citrulline modification is found at Arg517. Ser522 carries the post-translational modification Phosphoserine. A Phosphothreonine modification is found at Thr527.

It belongs to the HDGF family. Monomer. Interacts with IFRD1/PC4. Interacts (via IBD domain) with POGZ (via IBM motif) and CDCA7L (via IBM motifs). Interacts (via IBD domain) with KMT2A (via IBM motifs) with a moderate affinity whereas interacts with the KMT2A-MEN1 complex with a greater affinity; MEN1 enhances interaction of KMT2A with PSIP1. Interacts (via IBD domain) with IWS1 (via IBM motif), MED1 (via IBM motif) and DBF4 (via IBM motifs). Post-translationally, citrullinated by PADI4.

The protein resides in the nucleus. Its function is as follows. Transcriptional coactivator involved in neuroepithelial stem cell differentiation and neurogenesis. Involved in particular in lens epithelial cell gene regulation and stress responses. May play an important role in lens epithelial to fiber cell terminal differentiation. May play a protective role during stress-induced apoptosis. The sequence is that of PC4 and SFRS1-interacting protein (PSIP1) from Bos taurus (Bovine).